A 124-amino-acid polypeptide reads, in one-letter code: Small ribosomal subunit protein uS12 (124 aa).

Position 89 is a 3-methylthioaspartic acid (Asp-89). The segment at 105 to 124 (TGVDSRMQGRSKYGTKKPKK) is disordered.

It belongs to the universal ribosomal protein uS12 family. As to quaternary structure, part of the 30S ribosomal subunit. Contacts proteins S8 and S17. May interact with IF1 in the 30S initiation complex.

Its function is as follows. With S4 and S5 plays an important role in translational accuracy. Interacts with and stabilizes bases of the 16S rRNA that are involved in tRNA selection in the A site and with the mRNA backbone. Located at the interface of the 30S and 50S subunits, it traverses the body of the 30S subunit contacting proteins on the other side and probably holding the rRNA structure together. The combined cluster of proteins S8, S12 and S17 appears to hold together the shoulder and platform of the 30S subunit. The chain is Small ribosomal subunit protein uS12 from Vesicomyosocius okutanii subsp. Calyptogena okutanii (strain HA).